We begin with the raw amino-acid sequence, 192 residues long: 7-methyl-GTP pyrophosphatase (192 aa).

Residue Asp-69 is the Proton acceptor of the active site.

The protein belongs to the Maf family. YceF subfamily. It depends on a divalent metal cation as a cofactor.

The protein resides in the cytoplasm. The enzyme catalyses N(7)-methyl-GTP + H2O = N(7)-methyl-GMP + diphosphate + H(+). Nucleoside triphosphate pyrophosphatase that hydrolyzes 7-methyl-GTP (m(7)GTP). May have a dual role in cell division arrest and in preventing the incorporation of modified nucleotides into cellular nucleic acids. The protein is 7-methyl-GTP pyrophosphatase (maf-2) of Pseudomonas putida (strain ATCC 47054 / DSM 6125 / CFBP 8728 / NCIMB 11950 / KT2440).